We begin with the raw amino-acid sequence, 447 residues long: N-succinylarginine dihydrolase (447 aa).

Substrate contacts are provided by residues Ala-19–Ser-28, Asn-110, and His-137–Arg-138. Glu-174 is a catalytic residue. Position 212 (Arg-212) interacts with substrate. Residue His-248 is part of the active site. Residues Asp-250 and Asn-359 each contribute to the substrate site. Cys-365 acts as the Nucleophile in catalysis.

It belongs to the succinylarginine dihydrolase family. As to quaternary structure, homodimer.

It carries out the reaction N(2)-succinyl-L-arginine + 2 H2O + 2 H(+) = N(2)-succinyl-L-ornithine + 2 NH4(+) + CO2. The protein operates within amino-acid degradation; L-arginine degradation via AST pathway; L-glutamate and succinate from L-arginine: step 2/5. Functionally, catalyzes the hydrolysis of N(2)-succinylarginine into N(2)-succinylornithine, ammonia and CO(2). The polypeptide is N-succinylarginine dihydrolase (Escherichia coli O9:H4 (strain HS)).